The primary structure comprises 255 residues: Diphthine synthase (255 aa).

S-adenosyl-L-methionine is bound by residues leucine 9, aspartate 85, valine 88, 113-114, leucine 164, alanine 207, and histidine 232; that span reads SI.

This sequence belongs to the diphthine synthase family. Homodimer.

It carries out the reaction 2-[(3S)-amino-3-carboxypropyl]-L-histidyl-[translation elongation factor 2] + 3 S-adenosyl-L-methionine = diphthine-[translation elongation factor 2] + 3 S-adenosyl-L-homocysteine + 3 H(+). It functions in the pathway protein modification; peptidyl-diphthamide biosynthesis. S-adenosyl-L-methionine-dependent methyltransferase that catalyzes the trimethylation of the amino group of the modified target histidine residue in translation elongation factor 2 (EF-2), to form an intermediate called diphthine. The three successive methylation reactions represent the second step of diphthamide biosynthesis. The chain is Diphthine synthase from Methanococcus maripaludis (strain C7 / ATCC BAA-1331).